The sequence spans 238 residues: Probable septum site-determining protein MinC (238 aa).

The protein belongs to the MinC family. Interacts with MinD and FtsZ.

Functionally, cell division inhibitor that blocks the formation of polar Z ring septums. Rapidly oscillates between the poles of the cell to destabilize FtsZ filaments that have formed before they mature into polar Z rings. Prevents FtsZ polymerization. In Aeromonas salmonicida (strain A449), this protein is Probable septum site-determining protein MinC.